We begin with the raw amino-acid sequence, 117 residues long: NYGESGIVYPDGRLVQFTRAEADNIAEIGEAGVVMHDGTHVQFDRDMAAHHAGTPPQPMPVREMLAQPYGYSGIMKPDGNNRQFTAAESDNLVLVGPSGAVTADGKNVQFTDAGLPT.

Repeat copies occupy residues 1-17, 26-43, 67-84, and 93-110.

Calcified shell.

The chain is Cuticle protein CP1243 from Cancer pagurus (Rock crab).